Here is a 577-residue protein sequence, read N- to C-terminus: Proline--tRNA ligase (577 aa).

This sequence belongs to the class-II aminoacyl-tRNA synthetase family. ProS type 1 subfamily. As to quaternary structure, homodimer.

The protein localises to the cytoplasm. It carries out the reaction tRNA(Pro) + L-proline + ATP = L-prolyl-tRNA(Pro) + AMP + diphosphate. Its function is as follows. Catalyzes the attachment of proline to tRNA(Pro) in a two-step reaction: proline is first activated by ATP to form Pro-AMP and then transferred to the acceptor end of tRNA(Pro). As ProRS can inadvertently accommodate and process non-cognate amino acids such as alanine and cysteine, to avoid such errors it has two additional distinct editing activities against alanine. One activity is designated as 'pretransfer' editing and involves the tRNA(Pro)-independent hydrolysis of activated Ala-AMP. The other activity is designated 'posttransfer' editing and involves deacylation of mischarged Ala-tRNA(Pro). The misacylated Cys-tRNA(Pro) is not edited by ProRS. The chain is Proline--tRNA ligase from Thermotoga neapolitana (strain ATCC 49049 / DSM 4359 / NBRC 107923 / NS-E).